The chain runs to 410 residues: 2-oxoglutarate-dependent dioxygenase AOP3 (410 aa).

Residues 258 to 355 (GNASVGAKEA…RYAAALFSYP (98 aa)) form the Fe2OG dioxygenase domain. Fe cation-binding residues include H278, D280, and H335. R346 lines the 2-oxoglutarate pocket.

The protein belongs to the iron/ascorbate-dependent oxidoreductase family. The cofactor is Fe(2+).

2-oxoglutarate-dependent dioxygenase involved in glucosinolates biosynthesis. Catalyzes the conversion of methylsulfinylalkyl glucosinolates to hydroxyalkyl glucosinolates. The polypeptide is 2-oxoglutarate-dependent dioxygenase AOP3 (AOP3) (Arabidopsis thaliana (Mouse-ear cress)).